We begin with the raw amino-acid sequence, 426 residues long: Tachykinins (426 aa).

The propeptide occupies 1 to 116 (MQCDFRVHQD…IEDNLSHEFE (116 aa)). Arg-127 carries the arginine amide modification. A propeptide spanning residues 131–145 (GYLTPDFEDSYFRDE) is cleaved from the precursor. Arg-156 is subject to Arginine amide. The propeptide occupies 160–167 (VVSDDDYY). Arginine amide is present on Arg-178. A propeptide spanning residues 182–235 (SLEEVLGEIEKKAAMDYYDTRDKKTYVFEYPEDYEKRLLASIRGKLKEFPMEWE) is cleaved from the precursor. Arg-246 carries the arginine amide modification. Residues 250–259 (SLLDEIEELE) constitute a propeptide that is removed on maturation. Position 270 is an arginine amide (Arg-270). Positions 274-291 (NALENYIDYYLDPDMDFD) are excised as a propeptide. Residues 299 to 329 (QGMRGKKDSDKRAPMGFQGMRGKRNTGQRFD) are disordered. The residue at position 302 (Arg-302) is an Arginine amide. A propeptide spanning residues 306 to 308 (DSD) is cleaved from the precursor. At Arg-319 the chain carries Arginine amide. The propeptide occupies 323–358 (NTGQRFDTGINFNIRSSNEYQGTNNRRNALASCQLE). An arginine amide mark is found at Arg-369 and Arg-386. Residues 390–426 (WATAPYEDDSPFISVFDNTERIGVDGDSPAILGNSIS) constitute a propeptide that is removed on maturation.

It belongs to the tachykinin family. As to expression, tachykinins (TK) are expressed throughout the nervous system. APMGFQGMR-amide is also expressed in the retrocerebral complex (at protein level).

It is found in the secreted. In terms of biological role, tachykinins are active peptides which excite neurons, evoke behavioral responses, are potent vasodilators and secretagogues, and contract (directly or indirectly) many smooth muscles. This is Tachykinins from Camponotus floridanus (Florida carpenter ant).